Consider the following 302-residue polypeptide: MQDRIVRATAANGGIRLVAVLTTESSLEAKKRHGLSYLTTCILGRAFSASLLLASSMKIMHGRVTLRVRSDGPLKGLLVDAGRDGKVRGYVGNPNLELDLVKIDNDKYSFDFTKALGTGYLNVIRDSGFGEPFTSTVELVNGNIAEDLASYLYHSEQTPSAVFIGEKIQNKSVICSGGLLAQVLPKKDTDPLLISLLEERCKEINSFSEDLFKSKHNLLELIRNIFPDIDDKSISEKARSQEVSFKCKCSKQRSLNAMKMLDKSELEDILKKDGKAELVCEFCKNKYLINFEEIKSMIENQS.

Intrachain disulfides connect Cys-247-Cys-249 and Cys-280-Cys-283.

Belongs to the HSP33 family. Under oxidizing conditions two disulfide bonds are formed involving the reactive cysteines. Under reducing conditions zinc is bound to the reactive cysteines and the protein is inactive.

It localises to the cytoplasm. Redox regulated molecular chaperone. Protects both thermally unfolding and oxidatively damaged proteins from irreversible aggregation. Plays an important role in the bacterial defense system toward oxidative stress. In Prochlorococcus marinus (strain AS9601), this protein is 33 kDa chaperonin.